We begin with the raw amino-acid sequence, 120 residues long: Cytochrome c oxidase subunit 5 (120 aa).

The residue at position 2 (serine 2) is a Blocked amino end (Ser). Zn(2+) contacts are provided by cysteine 76, histidine 84, cysteine 99, and cysteine 102.

The protein belongs to the cytochrome c oxidase subunit 5B family. Component of the cytochrome c oxidase (complex IV, CIV), a multisubunit enzyme composed of a catalytic core of 3 subunits and several supernumerary subunits. The complex exists as a monomer or a dimer and forms supercomplexes (SCs) in the inner mitochondrial membrane with ubiquinol-cytochrome c oxidoreductase (cytochrome b-c1 complex, complex III, CIII). Slime mold cytochrome c oxidase consists of at least seven different polypeptides species, subunits I, II, III, IV, V, VI, and VIIe/s in order of MW.

It is found in the mitochondrion inner membrane. Its pathway is energy metabolism; oxidative phosphorylation. Its function is as follows. Component of the cytochrome c oxidase, the last enzyme in the mitochondrial electron transport chain which drives oxidative phosphorylation. The respiratory chain contains 3 multisubunit complexes succinate dehydrogenase (complex II, CII), ubiquinol-cytochrome c oxidoreductase (cytochrome b-c1 complex, complex III, CIII) and cytochrome c oxidase (complex IV, CIV), that cooperate to transfer electrons derived from NADH and succinate to molecular oxygen, creating an electrochemical gradient over the inner membrane that drives transmembrane transport and the ATP synthase. Cytochrome c oxidase is the component of the respiratory chain that catalyzes the reduction of oxygen to water. Electrons originating from reduced cytochrome c in the intermembrane space (IMS) are transferred via the dinuclear copper A center (CU(A)) of subunit 2 and heme A of subunit 1 to the active site in subunit 1, a binuclear center (BNC) formed by heme A3 and copper B (CU(B)). The BNC reduces molecular oxygen to 2 water molecules using 4 electrons from cytochrome c in the IMS and 4 protons from the mitochondrial matrix. The protein is Cytochrome c oxidase subunit 5 (cxeA) of Dictyostelium discoideum (Social amoeba).